Here is an 81-residue protein sequence, read N- to C-terminus: Sulfur carrier protein TusA (81 aa).

The active-site Cysteine persulfide intermediate is Cys-19.

Belongs to the sulfur carrier protein TusA family.

The protein localises to the cytoplasm. Sulfur carrier protein which probably makes part of a sulfur-relay system. This chain is Sulfur carrier protein TusA, found in Shewanella piezotolerans (strain WP3 / JCM 13877).